The sequence spans 442 residues: Gamma-glutamyl phosphate reductase (442 aa).

Belongs to the gamma-glutamyl phosphate reductase family.

It is found in the cytoplasm. It carries out the reaction L-glutamate 5-semialdehyde + phosphate + NADP(+) = L-glutamyl 5-phosphate + NADPH + H(+). The protein operates within amino-acid biosynthesis; L-proline biosynthesis; L-glutamate 5-semialdehyde from L-glutamate: step 2/2. Its function is as follows. Catalyzes the NADPH-dependent reduction of L-glutamate 5-phosphate into L-glutamate 5-semialdehyde and phosphate. The product spontaneously undergoes cyclization to form 1-pyrroline-5-carboxylate. The chain is Gamma-glutamyl phosphate reductase from Campylobacter curvus (strain 525.92).